Here is a 511-residue protein sequence, read N- to C-terminus: DEP domain-containing protein 7 (511 aa).

The DEP domain occupies 46–136; sequence LQTQVEVKKR…SSCSLYRFTT (91 aa).

The protein belongs to the DEPDC7 family.

The protein is DEP domain-containing protein 7 (DEPDC7) of Pongo abelii (Sumatran orangutan).